Reading from the N-terminus, the 174-residue chain is MRVEHIIGNIKDIDATHLDIDEVQIAWYDTKKKIARLNSQNGQVIAMKLAQAPKYGLNNGDILFLDEHKIIIISILPTWVLCMKPTHWHTMARLCYEIGNLHIPLFYNKDTMKLQAPFEQPLQRILEKQSIAFEKKWCVLDSKDRINITYPIASEPKLIQSPHFSIKITQKGLN.

It belongs to the UreE family.

Its subcellular location is the cytoplasm. In terms of biological role, involved in urease metallocenter assembly. Binds nickel. Probably functions as a nickel donor during metallocenter assembly. This chain is Urease accessory protein UreE, found in Helicobacter hepaticus (strain ATCC 51449 / 3B1).